The primary structure comprises 275 residues: Ribosomal RNA small subunit methyltransferase A (275 aa).

Residues N21, L23, G48, E69, D94, and N115 each coordinate S-adenosyl-L-methionine.

The protein belongs to the class I-like SAM-binding methyltransferase superfamily. rRNA adenine N(6)-methyltransferase family. RsmA subfamily.

The protein localises to the cytoplasm. The catalysed reaction is adenosine(1518)/adenosine(1519) in 16S rRNA + 4 S-adenosyl-L-methionine = N(6)-dimethyladenosine(1518)/N(6)-dimethyladenosine(1519) in 16S rRNA + 4 S-adenosyl-L-homocysteine + 4 H(+). Functionally, specifically dimethylates two adjacent adenosines (A1518 and A1519) in the loop of a conserved hairpin near the 3'-end of 16S rRNA in the 30S particle. May play a critical role in biogenesis of 30S subunits. The chain is Ribosomal RNA small subunit methyltransferase A from Clostridium botulinum (strain ATCC 19397 / Type A).